Here is a 235-residue protein sequence, read N- to C-terminus: Purine nucleoside phosphorylase DeoD-type (235 aa).

Position 4 (histidine 4) interacts with a purine D-ribonucleoside. Phosphate contacts are provided by residues glycine 20, arginine 24, arginine 43, and 87–90; that span reads RVGT. A purine D-ribonucleoside is bound by residues 179-181 and 203-204; these read EME and SD. Aspartate 204 acts as the Proton donor in catalysis.

It belongs to the PNP/UDP phosphorylase family. Homohexamer; trimer of homodimers.

It catalyses the reaction a purine D-ribonucleoside + phosphate = a purine nucleobase + alpha-D-ribose 1-phosphate. It carries out the reaction a purine 2'-deoxy-D-ribonucleoside + phosphate = a purine nucleobase + 2-deoxy-alpha-D-ribose 1-phosphate. In terms of biological role, catalyzes the reversible phosphorolytic breakdown of the N-glycosidic bond in the beta-(deoxy)ribonucleoside molecules, with the formation of the corresponding free purine bases and pentose-1-phosphate. In Brevibacillus brevis (strain 47 / JCM 6285 / NBRC 100599), this protein is Purine nucleoside phosphorylase DeoD-type.